The chain runs to 641 residues: Lipase (641 aa).

The first 38 residues, 1-38 (MKETKHQHTFSIRKSAYGAASVMVASCIFVIGGGVAEA), serve as a signal peptide directing secretion. Disordered regions lie at residues 41–174 (STTQ…PSVD) and 206–246 (TVSP…KPTV). The segment covering 53-64 (QTSQQETHTHQT) has biased composition (low complexity). A compositionally biased stretch (basic and acidic residues) spans 73–94 (TPEHVDDSKEATPLPEKAESPK). Composition is skewed to polar residues over residues 95–106 (TEVTVQPSSHTQ) and 127–139 (PESTIASKSVESN). Residues 140–165 (KATENEMSPVEHHASNVEKREDRLET) show a composition bias toward basic and acidic residues. A compositionally biased stretch (polar residues) spans 227–239 (ENTTAQNKFTSQA). Ser369 functions as the Nucleophile in the catalytic mechanism. Position 535 (Gly535) interacts with Ca(2+). Catalysis depends on Asp559, which acts as the Charge relay system. Ca(2+) is bound at residue Asp599. His600 functions as the Charge relay system in the catalytic mechanism. Ca(2+)-binding residues include Asp602, Asp607, and Asp610.

It belongs to the AB hydrolase superfamily. Lipase family. The cofactor is Ca(2+).

The protein localises to the secreted. The enzyme catalyses a triacylglycerol + H2O = a diacylglycerol + a fatty acid + H(+). The catalysed reaction is a 1,2-diacyl-sn-glycero-3-phosphocholine + H2O = a 2-acyl-sn-glycero-3-phosphocholine + a fatty acid + H(+). Has a broad substrate specificity hydrolyzing a variety of triglycerides and phosphatidylcholines. The chain is Lipase (lip) from Staphylococcus hyicus.